Here is a 164-residue protein sequence, read N- to C-terminus: MGNAMKQLMASLALRELWQGMAVTLRYMFRPNITIQYPEERTPYSPRFRGIHVLRRYEGGEERCVACKLCEAICPAQAIYIEIDTESRADKRLTKVYDIDLFKCIYCGLCEEACPVEAIVMGPYLDMAYEDRNARFYKKDQLLANGESWRAEIDARLNADAKYR.

4Fe-4S ferredoxin-type domains are found at residues 55–84 (RRYE…IEID) and 95–124 (KVYD…MGPY). Residues Cys64, Cys67, Cys70, Cys74, Cys104, Cys107, Cys110, and Cys114 each coordinate [4Fe-4S] cluster.

This sequence belongs to the complex I 23 kDa subunit family. NDH-1 is composed of 14 different subunits. Subunits NuoA, H, J, K, L, M, N constitute the membrane sector of the complex. It depends on [4Fe-4S] cluster as a cofactor.

It localises to the cell inner membrane. The enzyme catalyses a quinone + NADH + 5 H(+)(in) = a quinol + NAD(+) + 4 H(+)(out). NDH-1 shuttles electrons from NADH, via FMN and iron-sulfur (Fe-S) centers, to quinones in the respiratory chain. The immediate electron acceptor for the enzyme in this species is believed to be ubiquinone. Couples the redox reaction to proton translocation (for every two electrons transferred, four hydrogen ions are translocated across the cytoplasmic membrane), and thus conserves the redox energy in a proton gradient. The chain is NADH-quinone oxidoreductase subunit I from Magnetococcus marinus (strain ATCC BAA-1437 / JCM 17883 / MC-1).